Reading from the N-terminus, the 118-residue chain is Large ribosomal subunit protein bL20 (118 aa).

The protein belongs to the bacterial ribosomal protein bL20 family.

In terms of biological role, binds directly to 23S ribosomal RNA and is necessary for the in vitro assembly process of the 50S ribosomal subunit. It is not involved in the protein synthesizing functions of that subunit. This Shigella dysenteriae serotype 1 (strain Sd197) protein is Large ribosomal subunit protein bL20.